The following is a 416-amino-acid chain: Gamma-glutamyl phosphate reductase (416 aa).

Belongs to the gamma-glutamyl phosphate reductase family.

Its subcellular location is the cytoplasm. It carries out the reaction L-glutamate 5-semialdehyde + phosphate + NADP(+) = L-glutamyl 5-phosphate + NADPH + H(+). Its pathway is amino-acid biosynthesis; L-proline biosynthesis; L-glutamate 5-semialdehyde from L-glutamate: step 2/2. Functionally, catalyzes the NADPH-dependent reduction of L-glutamate 5-phosphate into L-glutamate 5-semialdehyde and phosphate. The product spontaneously undergoes cyclization to form 1-pyrroline-5-carboxylate. The sequence is that of Gamma-glutamyl phosphate reductase from Salmonella agona (strain SL483).